The following is a 304-amino-acid chain: Protoheme IX farnesyltransferase (304 aa).

Helical transmembrane passes span 24–44 (VMTL…GTIH), 45–65 (PVIA…AAAL), 107–127 (VFVM…FSIF), 145–165 (IVIG…AVTG), 172–192 (VLLF…LALF), 234–254 (WIGG…LVFV), and 277–297 (LFGY…GDRL).

This sequence belongs to the UbiA prenyltransferase family. Protoheme IX farnesyltransferase subfamily.

The protein localises to the cell inner membrane. The enzyme catalyses heme b + (2E,6E)-farnesyl diphosphate + H2O = Fe(II)-heme o + diphosphate. It functions in the pathway porphyrin-containing compound metabolism; heme O biosynthesis; heme O from protoheme: step 1/1. Converts heme B (protoheme IX) to heme O by substitution of the vinyl group on carbon 2 of heme B porphyrin ring with a hydroxyethyl farnesyl side group. This chain is Protoheme IX farnesyltransferase, found in Novosphingobium aromaticivorans (strain ATCC 700278 / DSM 12444 / CCUG 56034 / CIP 105152 / NBRC 16084 / F199).